Consider the following 331-residue polypeptide: UBX domain-containing protein 2B (331 aa).

Disordered regions lie at residues 1 to 26 (MAEG…SARD) and 40 to 65 (KCKS…QRFY). Residue Ala2 is modified to N-acetylalanine. Ser56 is modified (phosphoserine). Thr59 is subject to Phosphothreonine. Phosphoserine is present on Ser66. Residues 141–206 (DVQILLKLWS…MEDHQDQEYI (66 aa)) form the SEP domain. Phosphoserine occurs at positions 231, 234, and 235. The region spanning 252–329 (DSVPTTKIQI…DILNTVLLQQ (78 aa)) is the UBX domain.

Belongs to the NSFL1C family. As to quaternary structure, interacts with VCP. Does not bind ubiquitin.

Its subcellular location is the nucleus. The protein resides in the cytoplasm. It is found in the cytosol. It localises to the endoplasmic reticulum. The protein localises to the golgi apparatus. Its subcellular location is the cytoskeleton. The protein resides in the microtubule organizing center. It is found in the centrosome. In terms of biological role, adapter protein required for Golgi and endoplasmic reticulum biogenesis. Involved in Golgi and endoplasmic reticulum maintenance during interphase and in their reassembly at the end of mitosis. The complex formed with VCP has membrane fusion activity; membrane fusion activity requires USO1-GOLGA2 tethering and BET1L. VCPIP1 is also required, but not its deubiquitinating activity. Together with NSFL1C/p47, regulates the centrosomal levels of kinase AURKA/Aurora A during mitotic progression by promoting AURKA removal from centrosomes in prophase. Also, regulates spindle orientation during mitosis. This is UBX domain-containing protein 2B (UBXN2B) from Homo sapiens (Human).